The chain runs to 230 residues: Response regulator MprA (230 aa).

Residues 4-118 form the Response regulatory domain; sequence RILVVDDDRA…ELLARMRALL (115 aa). Asp48 carries the post-translational modification 4-aspartylphosphate. The ompR/PhoB-type DNA-binding region spans 129 to 227; that stretch reads SMAMRFSDLT…VRGVGYVLRE (99 aa).

In terms of processing, phosphorylated and dephosphorylated by MprB.

It is found in the cytoplasm. In terms of biological role, member of the two-component regulatory system MprB/MprA which contributes to maintaining a balance among several systems involved in stress resistance and is required for establishment and maintenance of persistent infection in the host. Functions as a transcriptional regulator that recognizes a 19-bp nucleotide motif comprizing two loosely conserved 8-bp direct DNA-binding motif repeats separated by a 3-bp spacer region. The chain is Response regulator MprA (mprA) from Mycobacterium tuberculosis (strain ATCC 25177 / H37Ra).